Reading from the N-terminus, the 419-residue chain is Septin-2 (419 aa).

Positions 40-306 (NGFVFNVMCI…ELYRQKRLEQ (267 aa)) constitute a Septin-type G domain. A G1 motif region spans residues 50–57 (GETGLGKS). Residues 50-57 (GETGLGKS), Ser79, Gly105, 186-194 (KADTISKVE), Gly240, and Arg255 contribute to the GTP site. The interval 102–105 (DTVG) is G3 motif. Residues 185-188 (AKAD) form a G4 motif region. The tract at residues 259-269 (WGTVQVENETH) is important for dimerization.

It belongs to the TRAFAC class TrmE-Era-EngA-EngB-Septin-like GTPase superfamily. Septin GTPase family. In terms of assembly, may assemble into a multicomponent structure.

It is found in the cytoplasm. The protein localises to the cytoskeleton. It localises to the spindle. Its function is as follows. Involved in cytokinesis. In Drosophila melanogaster (Fruit fly), this protein is Septin-2.